The following is a 186-amino-acid chain: Ribosome-recycling factor (186 aa).

Belongs to the RRF family.

The protein resides in the cytoplasm. Its function is as follows. Responsible for the release of ribosomes from messenger RNA at the termination of protein biosynthesis. May increase the efficiency of translation by recycling ribosomes from one round of translation to another. This chain is Ribosome-recycling factor, found in Endomicrobium trichonymphae.